A 130-amino-acid polypeptide reads, in one-letter code: Small ribosomal subunit protein uS9 (130 aa).

This sequence belongs to the universal ribosomal protein uS9 family.

The polypeptide is Small ribosomal subunit protein uS9 (Haemophilus influenzae (strain 86-028NP)).